Here is a 661-residue protein sequence, read N- to C-terminus: Vasorin (661 aa).

The first 19 residues, 1–19, serve as a signal peptide directing secretion; that stretch reads MWHLLVWIILLATAQQMIT. An LRRNT domain is found at 20–50; sequence EGCPAGCQCNTPQTVFCLARKNSNFPRSVPP. The Extracellular portion of the chain corresponds to 20-563; it reads EGCPAGCQCN…VTQSQEGNLT (544 aa). LRR repeat units lie at residues 52 to 72, 75 to 96, 99 to 120, 123 to 144, 147 to 168, 169 to 189, 191 to 212, 215 to 237, 238 to 258, and 259 to 281; these read TLNLYVFENGISSIEESSFIG, GLHLLDLSHNQLSSLPGGVFRN, NLSNLDLTSNQLTEISADTFQG, RLERLYLNGNRIRSIHPEAFKG, SLLELKLSNNQLVTPPAFSLPH, LLLLDLSYNAIPVIQQGVFNA, NIESLRLAGLGLKEVPEELLSG, NLHELDLSDNQLDKVPPGLHGLT, KLNIAGNVGFSQIQVDDLSNL, and PALQELDLSGLSLQTLPKGLFRS. N-linked (GlcNAc...) asparagine glycosylation occurs at Asn-99. In terms of domain architecture, LRRCT spans 293 to 346; that stretch reads NPFNCVCSLGWLSEWMRVSGVVLLRPDETRCHFPPKNAGKTLRQLRDSEYGCPA. Low complexity predominate over residues 348–385; it reads TTIQMPSTMPPSTTTGPPTTTKHLQTEAPTTASTTTTT. Residues 348–395 are disordered; that stretch reads TTIQMPSTMPPSTTTGPPTTTKHLQTEAPTTASTTTTTIPHQEQEEDT. An EGF-like domain is found at 403–440; sequence EDTLCPPQTCLNGGSCHLDPTGQLECECPPGFQGTYCE. 3 disulfide bridges follow: Cys-407–Cys-418, Cys-412–Cys-428, and Cys-430–Cys-439. Positions 455–543 constitute a Fibronectin type-III domain; sequence EQVKIIEVTV…EEDLCTETHT (89 aa). 2 N-linked (GlcNAc...) asparagine glycosylation sites follow: Asn-518 and Asn-561. Residues 564–584 form a helical membrane-spanning segment; it reads LVLVPAVAAGILLSAAVAAAA. At 585 to 661 the chain is on the cytoplasmic side; it reads CYARRRKGKG…PTGRLPHSYF (77 aa). Positions 591-661 are disordered; it reads KGKGHSVEDG…PTGRLPHSYF (71 aa). The segment covering 606-623 has biased composition (basic and acidic residues); that stretch reads DGVKKGLDGKGEVKKLSE.

The protein localises to the membrane. Its function is as follows. May act as an inhibitor of TGF-beta signaling. This is Vasorin (vasn) from Xenopus tropicalis (Western clawed frog).